We begin with the raw amino-acid sequence, 183 residues long: Holliday junction branch migration complex subunit RuvA (183 aa).

Residues 1 to 63 (MIVGLIGVVE…EDAHLLYGFL (63 aa)) form a domain I region. Residues 64-141 (EEGEKILFER…IQDETKPMHN (78 aa)) are domain II. Position 141 (N141) is a region of interest, flexible linker. The interval 141 to 183 (NEVFLALESLGFKSAEINKVLKTLKPSLSIEAAIKEALQQLRS) is domain III.

It belongs to the RuvA family. Homotetramer. Forms an RuvA(8)-RuvB(12)-Holliday junction (HJ) complex. HJ DNA is sandwiched between 2 RuvA tetramers; dsDNA enters through RuvA and exits via RuvB. An RuvB hexamer assembles on each DNA strand where it exits the tetramer. Each RuvB hexamer is contacted by two RuvA subunits (via domain III) on 2 adjacent RuvB subunits; this complex drives branch migration. In the full resolvosome a probable DNA-RuvA(4)-RuvB(12)-RuvC(2) complex forms which resolves the HJ.

The protein localises to the cytoplasm. In terms of biological role, the RuvA-RuvB-RuvC complex processes Holliday junction (HJ) DNA during genetic recombination and DNA repair, while the RuvA-RuvB complex plays an important role in the rescue of blocked DNA replication forks via replication fork reversal (RFR). RuvA specifically binds to HJ cruciform DNA, conferring on it an open structure. The RuvB hexamer acts as an ATP-dependent pump, pulling dsDNA into and through the RuvAB complex. HJ branch migration allows RuvC to scan DNA until it finds its consensus sequence, where it cleaves and resolves the cruciform DNA. The protein is Holliday junction branch migration complex subunit RuvA of Helicobacter pylori (strain G27).